The primary structure comprises 145 residues: Leptin (145 aa).

A signal peptide spans leucine 1–alanine 12.

Belongs to the leptin family.

The protein localises to the secreted. In terms of biological role, key player in the regulation of energy balance and body weight control. Once released into the circulation, has central and peripheral effects by binding LEPR, found in many tissues, which results in the activation of several major signaling pathways. In the hypothalamus, acts as an appetite-regulating factor that induces a decrease in food intake and an increase in energy consumption by inducing anorexinogenic factors and suppressing orexigenic neuropeptides, also regulates bone mass and secretion of hypothalamo-pituitary-adrenal hormones. In the periphery, increases basal metabolism, influences reproductive function, regulates pancreatic beta-cell function and insulin secretion, is pro-angiogenic for endothelial cell and affects innate and adaptive immunity. In the arcuate nucleus of the hypothalamus, activates by depolarization POMC neurons inducing FOS and SOCS3 expression to release anorexigenic peptides and inhibits by hyperpolarization NPY neurons inducing SOCS3 with a consequent reduction on release of orexigenic peptides. In addition to its known satiety inducing effect, has a modulatory role in nutrient absorption. In the intestine, reduces glucose absorption by enterocytes by activating PKC and leading to a sequential activation of p38, PI3K and ERK signaling pathways which exerts an inhibitory effect on glucose absorption. Acts as a growth factor on certain tissues, through the activation of different signaling pathways increases expression of genes involved in cell cycle regulation such as CCND1, via JAK2-STAT3 pathway, or VEGFA, via MAPK1/3 and PI3K-AKT1 pathways. May also play an apoptotic role via JAK2-STAT3 pathway and up-regulation of BIRC5 expression. Pro-angiogenic, has mitogenic activity on vascular endothelial cells and plays a role in matrix remodeling by regulating the expression of matrix metalloproteinases (MMPs) and tissue inhibitors of metalloproteinases (TIMPs). In innate immunity, modulates the activity and function of neutrophils by increasing chemotaxis and the secretion of oxygen radicals. Increases phagocytosis by macrophages and enhances secretion of pro-inflammatory mediators. Increases cytotoxic ability of NK cells. Plays a pro-inflammatory role, in synergy with IL1B, by inducing NOS2 which promotes the production of IL6, IL8 and Prostaglandin E2, through a signaling pathway that involves JAK2, PI3K, MAP2K1/MEK1 and MAPK14/p38. In adaptive immunity, promotes the switch of memory T-cells towards T helper-1 cell immune responses. Increases CD4(+)CD25(-) T-cell proliferation and reduces autophagy during TCR (T-cell receptor) stimulation, through MTOR signaling pathway activation and BCL2 up-regulation. This Equus caballus (Horse) protein is Leptin (LEP).